Reading from the N-terminus, the 690-residue chain is CREB-H transcription factor homolog let-607 (690 aa).

3 disordered regions span residues 87–118 (NDNC…SSGG), 166–192 (SAVH…SNGL), and 205–253 (PASI…KYPP). Composition is skewed to low complexity over residues 100 to 116 (SLPI…YHSS), 170 to 181 (QNQQQQQRRLNQ), and 213 to 236 (PSSS…SSST). The bZIP domain maps to 284 to 347 (DLKRIRRKIR…QSVISQLKKL (64 aa)). The basic motif stretch occupies residues 286–321 (KRIRRKIRNKRSAQTSRKRKQDYIEQLEDRVSESTK). The stretch at 295-350 (KRSAQTSRKRKQDYIEQLEDRVSESTKENQALKQQIERLSSENQSVISQLKKLQAQ) forms a coiled coil. The leucine-zipper stretch occupies residues 326–333 (LKQQIERL). Positions 451–464 (HNNSKYPASGNQNH) are enriched in polar residues. Disordered stretches follow at residues 451–495 (HNNS…SMYR) and 509–536 (GARK…ATSP). Low complexity-rich tracts occupy residues 480–492 (QPKQ…HQPS) and 514–535 (SSTS…SATS).

This sequence belongs to the bZIP family.

The protein resides in the nucleus. Probable transcription factor, required during migration of the gonadal distal tip cells (DTC). Probably regulates cell adhesion of DTCs via modulation of expression of genes involved in integrin-mediated adhesion, including tln-1, src-1, and integrin pat-2. Modulates expression of genes involved in protein trafficking during embryogenesis, including emo-1, sec-61, calu-1, sec-24.1, enpl-1, sar-1 and tfg-1. This is CREB-H transcription factor homolog let-607 from Caenorhabditis elegans.